The chain runs to 462 residues: uncharacterized protein (462 aa).

The disordered stretch occupies residues 405–462 (QPIGNNKSSPMKREFTAMEEDKTETGDIFKLLSQQKPAKGAKSKSKKYKKTEEDLSAV). Residues 415 to 431 (MKREFTAMEEDKTETGD) show a composition bias toward basic and acidic residues. Positions 443-453 (KGAKSKSKKYK) are enriched in basic residues.

This is an uncharacterized protein from Magallana gigas (Pacific oyster).